A 146-amino-acid polypeptide reads, in one-letter code: VNLTAAEKTQVTNLWGKVNVKELGGEALSRLLVVYPWTRRFFEHFGDLSTAEAVLHNAKVLAHGEKVLTSFGEGLKHLDNLKGTFADLSELHCDKLHVDPENFRLLGNVLVIVLARHFGKEFTPDVQAAYEKVVAGVANALAHKYH.

Val-1 carries the N-acetylvaline modification. Residues 2–146 enclose the Globin domain; it reads NLTAAEKTQV…VANALAHKYH (145 aa). At Thr-12 the chain carries Phosphothreonine. Residue Lys-59 is modified to N6-acetyllysine. Residue His-63 coordinates heme b. Lys-82 is modified (N6-acetyllysine). His-92 lines the heme b pocket. S-nitrosocysteine is present on Cys-93. An N6-acetyllysine modification is found at Lys-144.

Belongs to the globin family. As to quaternary structure, heterotetramer of two alpha chains and two beta chains. In terms of tissue distribution, red blood cells.

Functionally, involved in oxygen transport from the lung to the various peripheral tissues. This chain is Hemoglobin subunit beta (HBB), found in Loxodonta africana (African elephant).